The sequence spans 796 residues: Protein translocase subunit SecA 2 (796 aa).

ATP-binding positions include Q84, 102–106, and D496; that span reads GEGKT.

The protein belongs to the SecA family. As to quaternary structure, monomer and homodimer. Part of the essential Sec protein translocation apparatus which comprises SecA, SecYEG and auxiliary proteins SecDF. Other proteins may also be involved.

It is found in the cell membrane. The protein localises to the cytoplasm. The catalysed reaction is ATP + H2O + cellular proteinSide 1 = ADP + phosphate + cellular proteinSide 2.. In terms of biological role, part of the Sec protein translocase complex. Interacts with the SecYEG preprotein conducting channel. Has a central role in coupling the hydrolysis of ATP to the transfer of proteins into and across the cell membrane, serving as an ATP-driven molecular motor driving the stepwise translocation of polypeptide chains across the membrane. The chain is Protein translocase subunit SecA 2 from Staphylococcus aureus (strain MSSA476).